Here is an 834-residue protein sequence, read N- to C-terminus: ATP-dependent 6-phosphofructokinase (834 aa).

The N-terminal catalytic PFK domain 1 stretch occupies residues 1 to 426; that stretch reads MTTTSKIIND…FYEIFIACSN (426 aa). ATP contacts are provided by residues G62, 123-124, and 153-156; these read RS and GDGS. Position 154 (D154) interacts with Mg(2+). Substrate is bound by residues 199–201, R236, 243–245, E299, R326, and 332–335; these read SID, MGR, and HVQR. The active-site Proton acceptor is D201. The interval 427–437 is interdomain linker; the sequence is LHRRKVESKGM. The C-terminal regulatory PFK domain 2 stretch occupies residues 438 to 834; that stretch reads GVLILHSGGP…DPNVNPQFTL (397 aa). Residues R507, 566-570, R603, 610-612, E666, R692, 698-701, and R764 contribute to the beta-D-fructose 2,6-bisphosphate site; these read TIANN, MGA, and HLQQ. The segment at 799 to 834 is disordered; the sequence is SNLSEQDRPIKKSDISSPTSYSQKTFDPNVNPQFTL. Residues 803–812 are compositionally biased toward basic and acidic residues; sequence EQDRPIKKSD. Over residues 813-834 the composition is skewed to polar residues; it reads ISSPTSYSQKTFDPNVNPQFTL.

Belongs to the phosphofructokinase type A (PFKA) family. ATP-dependent PFK group I subfamily. Eukaryotic two domain clade 'E' sub-subfamily. As to quaternary structure, homotetramer. Requires Mg(2+) as cofactor. The N-terminus is blocked.

The protein resides in the cytoplasm. The catalysed reaction is beta-D-fructose 6-phosphate + ATP = beta-D-fructose 1,6-bisphosphate + ADP + H(+). The protein operates within carbohydrate degradation; glycolysis; D-glyceraldehyde 3-phosphate and glycerone phosphate from D-glucose: step 3/4. Allosterically activated by ADP, AMP, or fructose 2,6-bisphosphate, and allosterically inhibited by ATP or citrate. Its function is as follows. Catalyzes the phosphorylation of D-fructose 6-phosphate to fructose 1,6-bisphosphate by ATP, the first committing step of glycolysis. This chain is ATP-dependent 6-phosphofructokinase (pfkA), found in Dictyostelium discoideum (Social amoeba).